Consider the following 574-residue polypeptide: Membrane protein insertase YidC (574 aa).

Transmembrane regions (helical) follow at residues V6–E26, V350–L370, F376–Y396, G447–V467, F491–P511, and P525–V545.

It belongs to the OXA1/ALB3/YidC family. Type 1 subfamily. As to quaternary structure, interacts with the Sec translocase complex via SecD. Specifically interacts with transmembrane segments of nascent integral membrane proteins during membrane integration.

It localises to the cell inner membrane. Its function is as follows. Required for the insertion and/or proper folding and/or complex formation of integral membrane proteins into the membrane. Involved in integration of membrane proteins that insert both dependently and independently of the Sec translocase complex, as well as at least some lipoproteins. Aids folding of multispanning membrane proteins. The sequence is that of Membrane protein insertase YidC from Xanthomonas oryzae pv. oryzae (strain KACC10331 / KXO85).